The chain runs to 138 residues: Putative pre-16S rRNA nuclease (138 aa).

This sequence belongs to the YqgF nuclease family.

The protein localises to the cytoplasm. Functionally, could be a nuclease involved in processing of the 5'-end of pre-16S rRNA. In Salmonella arizonae (strain ATCC BAA-731 / CDC346-86 / RSK2980), this protein is Putative pre-16S rRNA nuclease.